The chain runs to 471 residues: Glutamate--tRNA ligase 1 (471 aa).

The 'HIGH' region signature appears at 10–20 (PSPTGYLHIGG). Residues C99, C101, C126, and D128 each contribute to the Zn(2+) site. The 'KMSKS' region signature appears at 238–242 (RLSKR). K241 contacts ATP.

Belongs to the class-I aminoacyl-tRNA synthetase family. Glutamate--tRNA ligase type 1 subfamily. As to quaternary structure, monomer. It depends on Zn(2+) as a cofactor.

The protein resides in the cytoplasm. The enzyme catalyses tRNA(Glu) + L-glutamate + ATP = L-glutamyl-tRNA(Glu) + AMP + diphosphate. Functionally, catalyzes the attachment of glutamate to tRNA(Glu) in a two-step reaction: glutamate is first activated by ATP to form Glu-AMP and then transferred to the acceptor end of tRNA(Glu). The protein is Glutamate--tRNA ligase 1 of Alkalilimnicola ehrlichii (strain ATCC BAA-1101 / DSM 17681 / MLHE-1).